A 136-amino-acid polypeptide reads, in one-letter code: MSQSISSSTKAEEVVSVDVSQAKTLLQSGHQYLDVRTQDEFRRGHCEAAKIVNIPYMLNTPQGRVKNQEFLEQVSSLLNPADDILVGCQSGARSLKATTELVAAGYKKVRNVGGGYLAWVDHSFPINTEEEEPSAN.

The region spanning leucine 26–threonine 128 is the Rhodanese domain. The Cysteine persulfide intermediate role is filled by cysteine 88.

It is found in the cytoplasm. The catalysed reaction is thiosulfate + hydrogen cyanide = thiocyanate + sulfite + 2 H(+). Catalyzes the transfer of a sulfur ion from a donor to cyanide or to other thiol compounds. Substrate preference is thiosulfate &gt; 3-mercaptopyruvate. This chain is Thiosulfate sulfurtransferase 18 (STR18), found in Arabidopsis thaliana (Mouse-ear cress).